The chain runs to 556 residues: MRSDVITKGTKSAPQRALLNALGLTKEEIERPLVGIVSSKNDIVPGHMNLDKIVEAVKTGVSMAGGTPIVFPAIAVCDGIAMGHQGMKYSLVTRDLIADSTEAMAMAHAFDALVMVPNCDKNVPGLLMAAARLNIPTIFVSGGPMLAGKVDGCKVSFSSISEAVGAFNGGKITEEKLEEFESKVCPTCGSCSGMYTANSMNCLTEVLGMALGGNGTIPAVYSDRIKLAKHAGMKIMELLERNIRPRDVMTEAAFKNALTMDMALGCSTNSMLHLPAIAHEAGIELNVDMANEISAKTPNLCHLAPAGHNYVEELNEAGGIYAVMNEINKLNLLSTDLITCTGKTVAENIKGCINKNKEVIRPVENPYSTTGGIAILKGNLAPDSCVVKRSAVAPEMLKHEGPARVFDCEEDALNAINTGKIVAGDVVIIRYEGPKGGPGMREMLNPTSAIMGRGLGGSVALITDGRFSGATRGAAIGHVSPEAAVGGNIALVEEGDIIKIDIEANSIDFEISEEELERRRSNWKPRQPKITTGYLARYASMVTSGNRGAILEIPKF.

Mg(2+) is bound at residue aspartate 78. Cysteine 119 lines the [2Fe-2S] cluster pocket. Mg(2+) is bound by residues aspartate 120 and lysine 121. An N6-carboxylysine modification is found at lysine 121. A [2Fe-2S] cluster-binding site is contributed by cysteine 191. Residue glutamate 442 coordinates Mg(2+). The Proton acceptor role is filled by serine 468.

This sequence belongs to the IlvD/Edd family. Homodimer. Requires [2Fe-2S] cluster as cofactor. Mg(2+) serves as cofactor.

It carries out the reaction (2R)-2,3-dihydroxy-3-methylbutanoate = 3-methyl-2-oxobutanoate + H2O. It catalyses the reaction (2R,3R)-2,3-dihydroxy-3-methylpentanoate = (S)-3-methyl-2-oxopentanoate + H2O. Its pathway is amino-acid biosynthesis; L-isoleucine biosynthesis; L-isoleucine from 2-oxobutanoate: step 3/4. It functions in the pathway amino-acid biosynthesis; L-valine biosynthesis; L-valine from pyruvate: step 3/4. In terms of biological role, functions in the biosynthesis of branched-chain amino acids. Catalyzes the dehydration of (2R,3R)-2,3-dihydroxy-3-methylpentanoate (2,3-dihydroxy-3-methylvalerate) into 2-oxo-3-methylpentanoate (2-oxo-3-methylvalerate) and of (2R)-2,3-dihydroxy-3-methylbutanoate (2,3-dihydroxyisovalerate) into 2-oxo-3-methylbutanoate (2-oxoisovalerate), the penultimate precursor to L-isoleucine and L-valine, respectively. This is Dihydroxy-acid dehydratase from Clostridium kluyveri (strain NBRC 12016).